The chain runs to 312 residues: Glyoxylate/hydroxypyruvate reductase A (312 aa).

Arg-227 is an active-site residue. Catalysis depends on His-275, which acts as the Proton donor.

It belongs to the D-isomer specific 2-hydroxyacid dehydrogenase family. GhrA subfamily.

The protein resides in the cytoplasm. The enzyme catalyses glycolate + NADP(+) = glyoxylate + NADPH + H(+). It catalyses the reaction (R)-glycerate + NAD(+) = 3-hydroxypyruvate + NADH + H(+). The catalysed reaction is (R)-glycerate + NADP(+) = 3-hydroxypyruvate + NADPH + H(+). Functionally, catalyzes the NADPH-dependent reduction of glyoxylate and hydroxypyruvate into glycolate and glycerate, respectively. The polypeptide is Glyoxylate/hydroxypyruvate reductase A (Klebsiella pneumoniae (strain 342)).